A 979-amino-acid chain; its full sequence is Chromosome partition protein Smc (979 aa).

33 to 40 (PNGSGKSN) provides a ligand contact to ATP. A coiled-coil region spans residues 169 to 400 (SKYKLDKEEA…INILKQQFEN (232 aa)). The 120-residue stretch at 419-538 (DGYIGLASEL…DNVDNANRIA (120 aa)) folds into the SMC hinge domain. Coiled-coil stretches lie at residues 572-716 (ILNY…HSDS) and 750-818 (SLDL…DKII).

Belongs to the SMC family. Homodimer.

The protein localises to the cytoplasm. Its function is as follows. Required for chromosome condensation and partitioning. The protein is Chromosome partition protein Smc of Mesomycoplasma hyorhinis (Mycoplasma hyorhinis).